We begin with the raw amino-acid sequence, 382 residues long: MCNKNNTFEKNLDISHKPEPLILFNKDNNIWNSKYFRIPNIQLLNDGTILTFSDIRYNGPDDHAYIDIASARSTDFGKTWSYNIAMKNNRIDSTYSRVMDSTTVITNTGRIILIAGSWNTNGNWAMTTSTRRSDWSVQMIYSDDNGLTWSNKIDLTKDSSKVKNQPSNTIGWLGGVGSGIVMDDGTIVMPAQISLRENNENNYYSLIIYSKDNGETWTMGNKVPNSNTSENMVIELDGALIMSTRYDYSGYRAAYISHDLGTTWEIYEPLNGKILTGKGSGCQGSFIKATTSNGHRIGLISAPKNTKGEYIRDNIAVYMIDFDDLSKGVQEICIPYPEDGNKLGGGYSCLSFKNNHLGIVYEANGNIEYQDLTPYYSLINKQ.

R37 lines the substrate pocket. D62 acts as the Proton acceptor in catalysis. BNR repeat units lie at residues 71–82, 140–151, and 208–219; these read ARSTDFGKTWSY, IYSDDNGLTWSN, and IYSKDNGETWTM. Residue R245 participates in substrate binding. The BNR 4 repeat unit spans residues 255–266; the sequence is YISHDLGTTWEI. The active-site Nucleophile is the Y347.

The protein belongs to the glycosyl hydrolase 33 family.

The protein resides in the secreted. It carries out the reaction Hydrolysis of alpha-(2-&gt;3)-, alpha-(2-&gt;6)-, alpha-(2-&gt;8)- glycosidic linkages of terminal sialic acid residues in oligosaccharides, glycoproteins, glycolipids, colominic acid and synthetic substrates.. Its function is as follows. Sialidases have been suggested to be pathogenic factors in microbial infections. The sequence is that of Sialidase (nanH) from Clostridium perfringens.